The chain runs to 127 residues: Large ribosomal subunit protein bL12c (127 aa).

The tract at residues 104–127 (GVAKDAAEEAKKQIEDAGGKASLK) is disordered. A compositionally biased stretch (basic and acidic residues) spans 105–121 (VAKDAAEEAKKQIEDAG).

This sequence belongs to the bacterial ribosomal protein bL12 family. In terms of assembly, homodimer. Part of the ribosomal stalk of the 50S ribosomal subunit. Forms a multimeric L10(L12)X complex, where L10 forms an elongated spine to which 2 to 4 L12 dimers bind in a sequential fashion. Binds GTP-bound translation factors.

It is found in the plastid. The protein resides in the chloroplast. In terms of biological role, forms part of the ribosomal stalk which helps the ribosome interact with GTP-bound translation factors. Is thus essential for accurate translation. The chain is Large ribosomal subunit protein bL12c from Trieres chinensis (Marine centric diatom).